The chain runs to 489 residues: Diacylglycerol O-acyltransferase 1 (489 aa).

Residues 1–54 form a disordered region; the sequence is MGDRGGAGGSRRRRTGSRPSIQGGSGPAAAEEEVRDVGAGGDAPVRDTDKDGDV. At 1–80 the chain is on the cytoplasmic side; that stretch reads MGDRGGAGGS…SLFSSDSGFS (80 aa). An involved in homomerization region spans residues 1-88; sequence MGDRGGAGGS…FSNYRGILNW (88 aa). Position 20 is a phosphoserine (S20). A compositionally biased stretch (basic and acidic residues) spans 44–53; sequence PVRDTDKDGD. A helical transmembrane segment spans residues 81–115; it reads NYRGILNWCVVMLILSNARLFLENLIKYGILVDPI. The Lumenal portion of the chain corresponds to 116-127; sequence QVVSLFLKDPYS. Positions 116–127 are extracellular loop 1 (EL1); sequence QVVSLFLKDPYS. Residues 128–153 form a helical membrane-spanning segment; sequence WPALCLVIVANIFAVAAFQVEKRLAV. The tract at residues 128–489 is MBOAT fold; the sequence is WPALCLVIVA…LNREAPAAGT (362 aa). At 154–158 the chain is on the cytoplasmic side; the sequence is GALTE. The helical transmembrane segment at 159-181 threads the bilayer; the sequence is QAGLLLHGVNLATILCFPAAVAF. Over 182–188 the chain is Lumenal; that stretch reads LLESITP. Residues 189–220 traverse the membrane as a helical segment; it reads VGSVLALMVYTILFLKLFSYRDVNLWCRERRA. The Cytoplasmic segment spans residues 221-274; sequence GAKAKAALAGKKANGGAAQRTVSYPDNLTYRDLYYFLFAPTLCYELNFPRSPRI. Residues 225-277 form an intracellular loop 1 (IL1) region; sequence KAALAGKKANGGAAQRTVSYPDNLTYRDLYYFLFAPTLCYELNFPRSPRIRKR. A helical transmembrane segment spans residues 275–309; that stretch reads RKRFLLRRLLEMLFLTQLQVGLIQQWMVPAIQNSM. The Lumenal portion of the chain corresponds to 310–316; that stretch reads KPFKDMD. Residues 317-354 traverse the membrane as a helical segment; that stretch reads YSRIVERLLKLAVPNHLIWLIFFYWLFHSCLNAVAELM. Topologically, residues 355 to 400 are cytoplasmic; it reads QFGDREFYRDWWNSESITYFWQNWNIPVHKWCIRHFYKPMLRRGSS. The interval 355–400 is intracellular loop 2 (IL2); sequence QFGDREFYRDWWNSESITYFWQNWNIPVHKWCIRHFYKPMLRRGSS. An FYXDWWN motif motif is present at residues 361 to 367; the sequence is FYRDWWN. Residues 375 to 383, Y391, and R405 each bind an acyl-CoA; that span reads WQNWNIPVH. The segment at 381-395 is amphipathic helix (AH); it reads PVHKWCIRHFYKPML. The chain crosses the membrane as a helical span at residues 401–421; the sequence is KWAARTAVFLASAFFHEYLVS. H416 is a catalytic residue. At 422–429 the chain is on the lumenal side; that stretch reads IPLRMFRL. The chain crosses the membrane as a helical span at residues 430-448; the sequence is WAFTGMMAQIPLAWIVGRF. Topologically, residues 449–450 are cytoplasmic; it reads FR. Residues 451-482 traverse the membrane as a helical segment; that stretch reads GNYGNAAVWLSLIIGQPVAVLMYVHDYYVLNR. Residue Y478 participates in an acyl-CoA binding. The Lumenal portion of the chain corresponds to 483 to 489; that stretch reads EAPAAGT.

Belongs to the membrane-bound acyltransferase family. Sterol o-acyltransferase subfamily. Homodimer or homotetramer; both forms have similar enzymatic activities.

It is found in the endoplasmic reticulum membrane. It carries out the reaction an acyl-CoA + a 1,2-diacyl-sn-glycerol = a triacyl-sn-glycerol + CoA. The catalysed reaction is all-trans-retinol + an acyl-CoA = an all-trans-retinyl ester + CoA. The enzyme catalyses 2-(9Z-octadecenoyl)-glycerol + (9Z)-octadecenoyl-CoA = 1,2-di-(9Z-octadecenoyl)-sn-glycerol + CoA. It catalyses the reaction 1,2-di-(9Z-octadecenoyl)-sn-glycerol + (9Z)-octadecenoyl-CoA = 1,2,3-tri-(9Z-octadecenoyl)-glycerol + CoA. It carries out the reaction all-trans-retinol + hexadecanoyl-CoA = all-trans-retinyl hexadecanoate + CoA. The catalysed reaction is 1-O-(9Z-octadecenyl)-glycerol + (9Z)-octadecenoyl-CoA = 1-O-(9Z-octadecyl)-3-(9Z-octadecenoyl)-glycerol + CoA. The enzyme catalyses 1-O-(9Z-octadecyl)-3-(9Z-octadecenoyl)-glycerol + (9Z)-octadecenoyl-CoA = 1-O-(9Z-octadecenyl)-2,3-di-(9Z-octadecenoyl)glycerol + CoA. It catalyses the reaction 1-(9Z-octadecenoyl)-glycerol + (9Z)-octadecenoyl-CoA = 1,2-di-(9Z-octadecenoyl)-glycerol + CoA. It carries out the reaction 1,2-di-(9Z-octadecenoyl)-glycerol + (9Z)-octadecenoate + H(+) = 1,2,3-tri-(9Z-octadecenoyl)-glycerol + H2O. The catalysed reaction is 1-octadecanoyl-2-(5Z,8Z,11Z,14Z-eicosatetraenoyl)-sn-glycerol + (9Z)-octadecenoyl-CoA = 1-octadecanoyl-2-(5Z,8Z,11Z,14Z)-eicosatetraenoyl-3-(9Z)-octadecenoyl-sn-glycerol + CoA. The enzyme catalyses hexadecane-1,2-diol + 2 hexadecanoyl-CoA = 1,2-O,O-dihexadecanoyl-1,2-hexadecanediol + 2 CoA. It catalyses the reaction hexadecane-1,2-diol + hexadecanoyl-CoA = 2-hydroxyhexadecyl hexadecanoate + CoA. It carries out the reaction 2-(9Z-octadecenoyl)-glycerol + hexadecanoyl-CoA = 1-hexadecanoyl-2-(9Z-octadecenoyl)-sn-glycerol + CoA. The catalysed reaction is 1,2-di-(9Z-octadecenoyl)-sn-glycerol + hexadecanoyl-CoA = 1,2-di-(9Z)-octadecenoyl-3-hexadecanoyl-sn-glycerol + CoA. The enzyme catalyses hexadecan-1-ol + hexadecanoyl-CoA = hexadecanyl hexadecanoate + CoA. It catalyses the reaction 13-cis-retinol + hexadecanoyl-CoA = 13-cis-retinyl hexadecanoate + CoA. It carries out the reaction 1,3-di-(9Z-octadecenoyl)-glycerol + (9Z)-octadecenoyl-CoA = 1,2,3-tri-(9Z-octadecenoyl)-glycerol + CoA. The catalysed reaction is 2,3-di-(9Z)-octadecenoyl-sn-glycerol + (9Z)-octadecenoyl-CoA = 1,2,3-tri-(9Z-octadecenoyl)-glycerol + CoA. The protein operates within lipid metabolism; glycerolipid metabolism. Catalyzes the terminal and only committed step in triacylglycerol synthesis by using diacylglycerol and fatty acyl CoA as substrates. Highly expressed in epithelial cells of the small intestine and its activity is essential for the absorption of dietary fats. In liver, plays a role in esterifying exogenous fatty acids to glycerol, and is required to synthesize fat for storage. Also present in female mammary glands, where it produces fat in the milk. May be involved in VLDL (very low density lipoprotein) assembly. In contrast to DGAT2 it is not essential for survival. Functions as the major acyl-CoA retinol acyltransferase (ARAT) in the skin, where it acts to maintain retinoid homeostasis and prevent retinoid toxicity leading to skin and hair disorders. Exhibits additional acyltransferase activities, includin acyl CoA:monoacylglycerol acyltransferase (MGAT), wax monoester and wax diester synthases. Also able to use 1-monoalkylglycerol (1-MAkG) as an acyl acceptor for the synthesis of monoalkyl-monoacylglycerol (MAMAG). The polypeptide is Diacylglycerol O-acyltransferase 1 (DGAT1) (Bos taurus (Bovine)).